The following is a 416-amino-acid chain: Casein kinase I isoform epsilon (416 aa).

One can recognise a Protein kinase domain in the interval 9 to 277 (YRLGRKIGSG…YLRQLFRNLF (269 aa)). ATP-binding positions include 15–23 (IGSGSFGDI) and K38. D128 functions as the Proton acceptor in the catalytic mechanism. Residues 301-318 (PEDMDRERREHEREERMG) show a composition bias toward basic and acidic residues. The tract at residues 301 to 416 (PEDMDRERRE…TSVPFDHLGK (116 aa)) is disordered. Positions 324–338 (ATRALPPGPPAGATG) are enriched in low complexity. 2 stretches are compositionally biased toward polar residues: residues 350-365 (STPT…TSPR) and 400-409 (SRISASQTSV).

It belongs to the protein kinase superfamily. CK1 Ser/Thr protein kinase family. Casein kinase I subfamily. In terms of assembly, monomer. Component of the circadian core oscillator, which includes the CRY proteins, CLOCK, or NPAS2, BMAL1 or BMAL2, CSNK1E, and the PER proteins.

The protein resides in the cytoplasm. It carries out the reaction L-seryl-[protein] + ATP = O-phospho-L-seryl-[protein] + ADP + H(+). The enzyme catalyses L-threonyl-[protein] + ATP = O-phospho-L-threonyl-[protein] + ADP + H(+). Its function is as follows. Casein kinases are operationally defined by their preferential utilization of acidic proteins such as caseins as substrates. Can phosphorylate a large number of proteins. Participates in Wnt signaling. Phosphorylates DVL1. Central component of the circadian clock. May act as a negative regulator of circadian rhythmicity by phosphorylating PER1 and PER2. Retains PER1 in the cytoplasm. The sequence is that of Casein kinase I isoform epsilon (CSNK1E) from Gallus gallus (Chicken).